Reading from the N-terminus, the 784-residue chain is ent-copalyl diphosphate synthase 2, chloroplastic (784 aa).

The transit peptide at 1 to 57 (MSMTLFASVTRPGLPGPTALRFPETRHLFHSVTAFAASFSPSKSSVGSSQCNATTPP) directs the protein to the chloroplast. Lys242 is a binding site for substrate. Asp379 and Asp381 together coordinate Mg(2+). The DXDD motif signature appears at 379–382 (DIDD). Lys466 contacts substrate.

It belongs to the terpene synthase family. Mg(2+) is required as a cofactor. As to expression, present in both leaves and flowers.

The protein localises to the plastid. It localises to the chloroplast. Its pathway is plant hormone biosynthesis; gibberellin biosynthesis. The protein operates within secondary metabolite biosynthesis; terpenoid biosynthesis. Involved in the biosynthesis of labdane-type diterpenoid including marrubiin and other labdane-related furanoid diterpenoids with potential applications as anti-diabetics, analgesics or vasorelaxants. May be involved in the conversion of geranylgeranyl diphosphate (GGPP) to ent-copalyl diphosphate (ent-CPP) and 8-hydroxycopalyl diphosphate (LPP, labda-13-en-8-ol diphosphate). This Marrubium vulgare (White horehound) protein is ent-copalyl diphosphate synthase 2, chloroplastic.